Here is a 968-residue protein sequence, read N- to C-terminus: RNA polymerase-associated protein RapA (968 aa).

Positions 164–334 (DVGRRHAPRV…FARLRLLDPS (171 aa)) constitute a Helicase ATP-binding domain. 177–184 (DEVGLGKT) is a binding site for ATP. Positions 280–283 (DEAH) match the DEAH box motif. One can recognise a Helicase C-terminal domain in the interval 490 to 644 (RVEWLMGHLT…TCPTGRAIYD (155 aa)).

Belongs to the SNF2/RAD54 helicase family. RapA subfamily. Interacts with the RNAP. Has a higher affinity for the core RNAP than for the holoenzyme. Its ATPase activity is stimulated by binding to RNAP.

In terms of biological role, transcription regulator that activates transcription by stimulating RNA polymerase (RNAP) recycling in case of stress conditions such as supercoiled DNA or high salt concentrations. Probably acts by releasing the RNAP, when it is trapped or immobilized on tightly supercoiled DNA. Does not activate transcription on linear DNA. Probably not involved in DNA repair. The sequence is that of RNA polymerase-associated protein RapA from Citrobacter koseri (strain ATCC BAA-895 / CDC 4225-83 / SGSC4696).